We begin with the raw amino-acid sequence, 373 residues long: D-alanine--D-alanine ligase (373 aa).

The ATP-grasp domain maps to 156–363 (KKLLAADGLP…YPTLLATMIE (208 aa)). An ATP-binding site is contributed by 184 to 239 (CERLGLPVFVKPARGGSSIGVSRVSSWDQLPAAVARARRHDPKVIVEAAISGRELE). Positions 318, 330, and 332 each coordinate Mg(2+).

Belongs to the D-alanine--D-alanine ligase family. Mg(2+) is required as a cofactor. The cofactor is Mn(2+).

It localises to the cytoplasm. The enzyme catalyses 2 D-alanine + ATP = D-alanyl-D-alanine + ADP + phosphate + H(+). It participates in cell wall biogenesis; peptidoglycan biosynthesis. Its function is as follows. Cell wall formation. The polypeptide is D-alanine--D-alanine ligase (Mycobacterium bovis (strain BCG / Pasteur 1173P2)).